A 418-amino-acid polypeptide reads, in one-letter code: UDP-N-acetylglucosamine 1-carboxyvinyltransferase (418 aa).

Residue Lys22–Asn23 participates in phosphoenolpyruvate binding. Arg92 serves as a coordination point for UDP-N-acetyl-alpha-D-glucosamine. The Proton donor role is filled by Cys116. Cys116 is modified (2-(S-cysteinyl)pyruvic acid O-phosphothioketal). Residues Arg121–Leu125, Asp305, and Ile327 contribute to the UDP-N-acetyl-alpha-D-glucosamine site.

It belongs to the EPSP synthase family. MurA subfamily.

It localises to the cytoplasm. It catalyses the reaction phosphoenolpyruvate + UDP-N-acetyl-alpha-D-glucosamine = UDP-N-acetyl-3-O-(1-carboxyvinyl)-alpha-D-glucosamine + phosphate. It participates in cell wall biogenesis; peptidoglycan biosynthesis. Its function is as follows. Cell wall formation. Adds enolpyruvyl to UDP-N-acetylglucosamine. The protein is UDP-N-acetylglucosamine 1-carboxyvinyltransferase of Acidiphilium cryptum (strain JF-5).